The following is a 460-amino-acid chain: Putative RNA-guided DNA endonuclease MT2953 (460 aa).

Catalysis depends on residues Asp-224 and Glu-313. Cys-372, Cys-375, Cys-389, and Cys-392 together coordinate Zn(2+). Asp-399 is a catalytic residue. The segment at 415-460 (VVGPVGAAVKRGADRKTGPGPAGGREARKATGHPAGEQPRDGVQVK) is disordered.

In the N-terminal section; belongs to the transposase 2 family. It in the C-terminal section; belongs to the transposase 35 family.

An RNA-guided dsDNA endonuclease. When guided by an RNA derived from the right-end element of its insertion sequence element (IS), cleaves DNA downstream of the transposon-associated motif (TAM). Cleaves supercoiled and linear DNA in a staggered manner 15-21 bases from the TAM yielding 5'-overhangs. Binds reRNA, an approximately 150 nucleotide base sRNA derived from the 3' end of its own gene, the right end (RE) of the insertion sequence (IS) plus sequence downstream of the IS. The polypeptide is Putative RNA-guided DNA endonuclease MT2953 (Mycobacterium tuberculosis (strain CDC 1551 / Oshkosh)).